We begin with the raw amino-acid sequence, 505 residues long: tRNA-2-methylthio-N(6)-dimethylallyladenosine synthase (505 aa).

In terms of domain architecture, MTTase N-terminal spans 14–132; sequence RTYEVRTYGC…LPVLLERARV (119 aa). Residues C23, C61, C95, C169, C173, and C176 each coordinate [4Fe-4S] cluster. The Radical SAM core domain maps to 155 to 386; it reads RESAYAAWVS…ALQEEISWEE (232 aa). A TRAM domain is found at 388 to 456; that stretch reads KKQVGRTLEL…PHHLLAEGPV (69 aa).

Belongs to the methylthiotransferase family. MiaB subfamily. As to quaternary structure, monomer. It depends on [4Fe-4S] cluster as a cofactor.

It is found in the cytoplasm. It catalyses the reaction N(6)-dimethylallyladenosine(37) in tRNA + (sulfur carrier)-SH + AH2 + 2 S-adenosyl-L-methionine = 2-methylsulfanyl-N(6)-dimethylallyladenosine(37) in tRNA + (sulfur carrier)-H + 5'-deoxyadenosine + L-methionine + A + S-adenosyl-L-homocysteine + 2 H(+). In terms of biological role, catalyzes the methylthiolation of N6-(dimethylallyl)adenosine (i(6)A), leading to the formation of 2-methylthio-N6-(dimethylallyl)adenosine (ms(2)i(6)A) at position 37 in tRNAs that read codons beginning with uridine. The sequence is that of tRNA-2-methylthio-N(6)-dimethylallyladenosine synthase from Streptomyces viridosporus (strain ATCC 14672 / DSM 40746 / JCM 4963 / KCTC 9882 / NRRL B-12104 / FH 1290) (Streptomyces ghanaensis).